Here is a 688-residue protein sequence, read N- to C-terminus: Chaperone protein dnaK1 (688 aa).

A Phosphothreonine; by autocatalysis modification is found at T198. The segment covering 630–661 (DLPRDSYRERDAYNNRDYGRDYGRDYGRDSRP) has biased composition (basic and acidic residues). Residues 630 to 688 (DLPRDSYRERDAYNNRDYGRDYGRDYGRDSRPSYDNSRPPRKSPRPSYQDNWDDDDDWL) form a disordered region.

The protein belongs to the heat shock protein 70 family.

Acts as a chaperone. The chain is Chaperone protein dnaK1 (dnaK1) from Nostoc sp. (strain PCC 7120 / SAG 25.82 / UTEX 2576).